A 147-amino-acid polypeptide reads, in one-letter code: Receptor activity-modifying protein 3 (147 aa).

The signal sequence occupies residues 1 to 22 (MATPAQRLHLLPLLLLLCGECA). Over 23-112 (QVCGCNETGM…CTVDRTHWED (90 aa)) the chain is Extracellular. N-linked (GlcNAc...) asparagine glycans are attached at residues Asn28, Asn57, Asn70, and Asn102. 2 disulfides stabilise this stretch: Cys39/Cys71 and Cys56/Cys103. The helical transmembrane segment at 113–137 (PPDEVLIPLIAVPVLLTVAMAGLVV) threads the bilayer. At 138-147 (WRSKRTDRLL) the chain is on the cytoplasmic side.

Belongs to the RAMP family. Heterodimer of CALCRL and RAMP3; interaction induces allosteric modulation of CALCRL function and ligand specificity for adrenomedullin/ADM and intermedin/ADM2. Heterodimer of CALCR and RAMP3; interaction form the receptor complex AMYR3 for amylin/IAPP. Interacts with GPER1.

Its subcellular location is the cell membrane. The protein localises to the membrane. Accessory protein that interacts with and modulates the function of G-protein coupled receptors including calcitonin gene-related peptide type 1 receptor (CALCRL), calcitonin receptor (CALCR) and G-protein coupled estrogen receptor 1 (GPER1). Required for the transport of CALCRL and GPER1 receptors to the plasma membrane. Plays a role in cardioprotection by reducing cardiac hypertrophy and perivascular fibrosis in a GPER1-dependent manner. Together with CALCRL, form a receptor complex for adrenomedullin/ADM and intermedin/ADM2. Together with CALCR, act as a receptor complex for amylin/IAPP. This Rattus norvegicus (Rat) protein is Receptor activity-modifying protein 3.